A 434-amino-acid polypeptide reads, in one-letter code: Trigger factor (434 aa).

Residues 161-246 (EDRATIDFTG…LKKVEERELP (86 aa)) enclose the PPIase FKBP-type domain.

This sequence belongs to the FKBP-type PPIase family. Tig subfamily.

The protein resides in the cytoplasm. The enzyme catalyses [protein]-peptidylproline (omega=180) = [protein]-peptidylproline (omega=0). Involved in protein export. Acts as a chaperone by maintaining the newly synthesized protein in an open conformation. Functions as a peptidyl-prolyl cis-trans isomerase. In Pectobacterium atrosepticum (strain SCRI 1043 / ATCC BAA-672) (Erwinia carotovora subsp. atroseptica), this protein is Trigger factor.